The sequence spans 95 residues: Aspartyl/glutamyl-tRNA(Asn/Gln) amidotransferase subunit C (95 aa).

It belongs to the GatC family. In terms of assembly, heterotrimer of A, B and C subunits.

The catalysed reaction is L-glutamyl-tRNA(Gln) + L-glutamine + ATP + H2O = L-glutaminyl-tRNA(Gln) + L-glutamate + ADP + phosphate + H(+). It carries out the reaction L-aspartyl-tRNA(Asn) + L-glutamine + ATP + H2O = L-asparaginyl-tRNA(Asn) + L-glutamate + ADP + phosphate + 2 H(+). Its function is as follows. Allows the formation of correctly charged Asn-tRNA(Asn) or Gln-tRNA(Gln) through the transamidation of misacylated Asp-tRNA(Asn) or Glu-tRNA(Gln) in organisms which lack either or both of asparaginyl-tRNA or glutaminyl-tRNA synthetases. The reaction takes place in the presence of glutamine and ATP through an activated phospho-Asp-tRNA(Asn) or phospho-Glu-tRNA(Gln). The sequence is that of Aspartyl/glutamyl-tRNA(Asn/Gln) amidotransferase subunit C from Bradyrhizobium diazoefficiens (strain JCM 10833 / BCRC 13528 / IAM 13628 / NBRC 14792 / USDA 110).